The primary structure comprises 530 residues: Glucose-6-phosphate isomerase (530 aa).

Glu-356 acts as the Proton donor in catalysis. Catalysis depends on residues His-387 and Lys-502.

Belongs to the GPI family.

The protein localises to the cytoplasm. The enzyme catalyses alpha-D-glucose 6-phosphate = beta-D-fructose 6-phosphate. It participates in carbohydrate biosynthesis; gluconeogenesis. It functions in the pathway carbohydrate degradation; glycolysis; D-glyceraldehyde 3-phosphate and glycerone phosphate from D-glucose: step 2/4. Functionally, catalyzes the reversible isomerization of glucose-6-phosphate to fructose-6-phosphate. The protein is Glucose-6-phosphate isomerase of Borreliella burgdorferi (strain ATCC 35210 / DSM 4680 / CIP 102532 / B31) (Borrelia burgdorferi).